A 201-amino-acid chain; its full sequence is Probable GTP-binding protein EngB (201 aa).

The EngB-type G domain occupies 22–195 (SLPEIAFCGR…MEQLEMILKY (174 aa)). Residues 30–37 (GRSNVGKS), 57–61 (GKTRT), 75–78 (DLPG), 142–145 (TKLD), and 174–176 (YSS) contribute to the GTP site. Mg(2+) is bound by residues Ser-37 and Thr-59.

This sequence belongs to the TRAFAC class TrmE-Era-EngA-EngB-Septin-like GTPase superfamily. EngB GTPase family. Mg(2+) is required as a cofactor.

Necessary for normal cell division and for the maintenance of normal septation. In Finegoldia magna (strain ATCC 29328 / DSM 20472 / WAL 2508) (Peptostreptococcus magnus), this protein is Probable GTP-binding protein EngB.